A 1135-amino-acid chain; its full sequence is MTQLLRFLLILSIFCDFSHSQRPTIRVGIAAALKTQNGSIGWAYAGGAVPLALQYLKSHGFVKDFDFEFHVEYTECDLTETVRAGLDFMKTKNYDVIIGPPCATPLIAMGTLSTVYKKPVLGWGFVSESEFSDMERFPYLTSVLPSSMTLGTVTSALLELYGWDRIALVYFKNELNYCSGVIEDVETSLYDENYSQMVQVVIKEEVDQNNTENFVATLQMIKARARIIIFCAQTGAEKRFYMIQAGKQGMNTSEYVHVMLSMRSVGFGVQSAVGKKPLNSGLAPIWEAFQVAPDGLEDLAKSVASKMLVIDLSSDIRDKEFLQYMTKNIVYAIREPPLSCMAPECLAANATGMGAYARHLFDVFYMYGMALTNLNSTDPNIYGNVDLLVSKFTTPFEGMTGQVQLNSELSRLPLYQVYALNKEYDQISIMNISLINGTAKVSLAYQNESSDVWHFWGSTRPLDTPICGFLGKSCPIPFFDQYRLLIFVFVIVAGLLILAIFTCLTSMVRNQRAEQSRLNSEWQIHAIKLRIPEKKGRRLSTDSENSTVTKSSKGSSSKNFETSEFNENYEIQFLENDLVLTTAHQVQELSNLDKMRLVKLRKLDHENLNKFIGLSIDGSRYLAVWKMCTRGSIQDIMSRGNFSMDYFFMFCMIRDIAEGLNFLHKSFLRLHGNLRSATCLVNDSWQVKLAEFGLEFLQDDEERPTQKRLLWAAPEVLRGSLTVSQMDPSADVYSFAIVASEILTKKEAWDLHKRKEGYEGKRGNSKIEIIYNVKKGGPHPFRPTLLTDSDVNKSLLALVKDCWSENPEARPNTENICKIILDMTPRTKDNLMDHVFSMLEEYTQTLEVEVDERTKELVLEKKKSDILLGRMLPKQVAERLKAGQAVEPESFDLVTVFFSDLVKFTELANKCSPFQVVNLLNEVFSNFDAIIEKHDVYKVESIGDGFLCVSGLPNRNGVEHIRQIVEMALGFLEFCDKFRIPHLPRERVELRVGVNSGSCVAGVVGLSMPRYCLFGDTVNTASRMESNGKASLIHMSEIAHAFLVDHFPYQYETNSRGEVIIKGKGVMETFWLLGRISMSNRSTPPVAQLKQLPQKCSSFTDTGTIRSVSPYIENASDSEDEELRRVMRREMMRVS.

The first 20 residues, 1–20 (MTQLLRFLLILSIFCDFSHS), serve as a signal peptide directing secretion. The Extracellular segment spans residues 21–483 (QRPTIRVGIA…CPIPFFDQYR (463 aa)). Residues asparagine 37, asparagine 193, asparagine 209, asparagine 251, asparagine 349, asparagine 375, asparagine 431, asparagine 436, and asparagine 447 are each glycosylated (N-linked (GlcNAc...) asparagine). A helical membrane pass occupies residues 484–504 (LLIFVFVIVAGLLILAIFTCL). Topologically, residues 505 to 1135 (TSMVRNQRAE…VMRREMMRVS (631 aa)) are cytoplasmic. Positions 535–560 (KGRRLSTDSENSTVTKSSKGSSSKNF) are disordered. Residues 545–837 (NSTVTKSSKG…KDNLMDHVFS (293 aa)) form the Protein kinase domain. Residues 546–560 (STVTKSSKGSSSKNF) are compositionally biased toward low complexity. One can recognise a Guanylate cyclase domain in the interval 895-1025 (TVFFSDLVKF…DTVNTASRME (131 aa)).

It belongs to the adenylyl cyclase class-4/guanylyl cyclase family. As to expression, expressed bilaterally in ASE neurons.

The protein localises to the cell membrane. The catalysed reaction is GTP = 3',5'-cyclic GMP + diphosphate. Guanylate cyclase involved in the production of the second messenger cGMP. Regulates chemotaxis responses toward salt ions in ASE sensory neurons. This Caenorhabditis briggsae protein is Receptor-type guanylate cyclase gcy-4.